The sequence spans 328 residues: Surface antigen CRP170 (328 aa).

2 repeats span residues 38–102 (NAPC…CKKC) and 103–167 (NAPC…CKKC).

The protein is Surface antigen CRP170 of Giardia intestinalis (Giardia lamblia).